Reading from the N-terminus, the 899-residue chain is Translation initiation factor IF-2 (899 aa).

2 disordered regions span residues lysine 65–isoleucine 84 and threonine 91–lysine 310. Residues serine 68–valine 82 are compositionally biased toward polar residues. Residues glutamine 108–valine 164 are compositionally biased toward basic and acidic residues. The span at threonine 165–lysine 174 shows a compositional bias: polar residues. Residues glutamine 177 to aspartate 236 are compositionally biased toward basic and acidic residues. Residues serine 262–asparagine 276 are compositionally biased toward basic residues. Residues arginine 277–alanine 290 show a composition bias toward basic and acidic residues. The 170-residue stretch at alanine 398–lysine 567 folds into the tr-type G domain. The segment at glycine 407–threonine 414 is G1. Residue glycine 407–threonine 414 coordinates GTP. The segment at glycine 432–histidine 436 is G2. The segment at aspartate 453–glycine 456 is G3. GTP-binding positions include aspartate 453–histidine 457 and asparagine 507–aspartate 510. The segment at asparagine 507 to aspartate 510 is G4. The tract at residues serine 543 to lysine 545 is G5.

It belongs to the TRAFAC class translation factor GTPase superfamily. Classic translation factor GTPase family. IF-2 subfamily.

It is found in the cytoplasm. Its function is as follows. One of the essential components for the initiation of protein synthesis. Protects formylmethionyl-tRNA from spontaneous hydrolysis and promotes its binding to the 30S ribosomal subunits. Also involved in the hydrolysis of GTP during the formation of the 70S ribosomal complex. This is Translation initiation factor IF-2 from Pectobacterium carotovorum subsp. carotovorum (strain PC1).